The sequence spans 152 residues: Deoxyuridine 5'-triphosphate nucleotidohydrolase (152 aa).

Substrate-binding positions include 71-73 (RSG), N84, 88-90 (LID), and M98.

Belongs to the dUTPase family. Mg(2+) serves as cofactor.

It catalyses the reaction dUTP + H2O = dUMP + diphosphate + H(+). It functions in the pathway pyrimidine metabolism; dUMP biosynthesis; dUMP from dCTP (dUTP route): step 2/2. This enzyme is involved in nucleotide metabolism: it produces dUMP, the immediate precursor of thymidine nucleotides and it decreases the intracellular concentration of dUTP so that uracil cannot be incorporated into DNA. The sequence is that of Deoxyuridine 5'-triphosphate nucleotidohydrolase from Salmonella arizonae (strain ATCC BAA-731 / CDC346-86 / RSK2980).